A 557-amino-acid polypeptide reads, in one-letter code: Elongator complex protein 3 (557 aa).

Residues 91–381 (RTASGIAVVA…YRVQRDIPMP (291 aa)) enclose the Radical SAM core domain. Residues cysteine 108, cysteine 118, and cysteine 121 each contribute to the [4Fe-4S] cluster site. Acetyl-CoA is bound at residue lysine 173. Positions 405 to 557 (TTCRDVRTRE…LDGPYMSKRI (153 aa)) constitute an N-acetyltransferase domain. A Glycyl lysine isopeptide (Lys-Gly) (interchain with G-Cter in ubiquitin) cross-link involves residue lysine 453. Residues 485 to 488 (ELHV), 508 to 510 (FGT), and tyrosine 541 contribute to the acetyl-CoA site.

Belongs to the ELP3 family. In terms of assembly, component of the elongator complex which consists of ELP1/IKI3, ELP2, ELP3, ELP4, ELP5/IKI1 and ELP6. The elongator complex is composed of two copies of the Elp123 subcomplex (composed of ELP1/IKI3, ELP2 and ELP3) and two copies of the Elp456 subcomplex (composed of ELP4, ELP5/IKI1 and ELP6). The Elp123 subcomplex forms a two-lobed scaffold, which binds the Elp456 subcomplex asymmetrically. In each lobe, ELP2 is tightly sandwiched between ELP1/IKI3 and ELP3. The Elp123 subcomplex binds tRNA through ELP1/IKI3 and ELP3 and can bind 2 tRNAs simultaneously. tRNA-binding induces conformational rearrangements which precisely position the targeted anticodon base in the active site. ELP3 interacts with KTI11/DPH3. ELP3 interacts with KTI12. The Elp456 subcomplex binds tRNA and has ATPase activity. [4Fe-4S] cluster is required as a cofactor.

The protein localises to the cytoplasm. It localises to the nucleus. It carries out the reaction uridine(34) in tRNA + acetyl-CoA + S-adenosyl-L-methionine + H2O = 5-(carboxymethyl)uridine(34) in tRNA + 5'-deoxyadenosine + L-methionine + CoA + 2 H(+). It functions in the pathway tRNA modification; 5-methoxycarbonylmethyl-2-thiouridine-tRNA biosynthesis. Functionally, catalytic tRNA acetyltransferase subunit of the elongator complex which is required for multiple tRNA modifications, including mcm5U (5-methoxycarbonylmethyl uridine), mcm5s2U (5-methoxycarbonylmethyl-2-thiouridine), and ncm5U (5-carbamoylmethyl uridine). In the elongator complex, acts as a tRNA uridine(34) acetyltransferase, which mediates formation of carboxymethyluridine in the wobble base at position 34 in tRNAs. The complex functions as a gamma-toxin target (TOT); disruption of the complex confers resistance to Kluyveromyces lactis toxin zymocin (pGKL1 killer toxin). May also be involved in sensitivity to Pichia inositovora toxin. Independently, ELP3 may be involved in polarized exocytosis. The sequence is that of Elongator complex protein 3 from Saccharomyces cerevisiae (strain ATCC 204508 / S288c) (Baker's yeast).